The chain runs to 364 residues: Dihydroorotate dehydrogenase (quinone) (364 aa).

Residues 61-65 (AGFDK) and Thr85 each bind FMN. Lys65 provides a ligand contact to substrate. 110–114 (NRMGF) contacts substrate. 2 residues coordinate FMN: Asn139 and Asn170. A substrate-binding site is contributed by Asn170. The active-site Nucleophile is Ser173. Asn175 provides a ligand contact to substrate. FMN contacts are provided by Lys214 and Ala242. Position 243-244 (243-244 (NT)) interacts with substrate. Residues Gly266, Gly295, and 316 to 317 (YS) contribute to the FMN site.

This sequence belongs to the dihydroorotate dehydrogenase family. Type 2 subfamily. Monomer. FMN is required as a cofactor.

The protein localises to the cell membrane. The enzyme catalyses (S)-dihydroorotate + a quinone = orotate + a quinol. Its pathway is pyrimidine metabolism; UMP biosynthesis via de novo pathway; orotate from (S)-dihydroorotate (quinone route): step 1/1. Catalyzes the conversion of dihydroorotate to orotate with quinone as electron acceptor. The polypeptide is Dihydroorotate dehydrogenase (quinone) (Rhodopseudomonas palustris (strain BisB5)).